We begin with the raw amino-acid sequence, 214 residues long: MNYPHPIIAREGWPFIAIAAVVALLIHAVGGFGFAWPFWLLLVFVVQFFRDPQRPIPAQPNAVLCPADGRIVAVETAQDPYANREALKISVFMNVFNVHSQRSPVDGAISKVEYFPGAFLNAAIDKASTENERNAVVIQTASGKTVTSVQIAGLIARRILCYVRAGEPLSRGQRYGFIRFGSRVDVYLPLGSRAKVSIGEKVYASSTILAELEQ.

The Schiff-base intermediate with substrate; via pyruvic acid role is filled by serine 182. Serine 182 is modified (pyruvic acid (Ser); by autocatalysis).

The protein belongs to the phosphatidylserine decarboxylase family. PSD-A subfamily. In terms of assembly, heterodimer of a large membrane-associated beta subunit and a small pyruvoyl-containing alpha subunit. Pyruvate is required as a cofactor. Post-translationally, is synthesized initially as an inactive proenzyme. Formation of the active enzyme involves a self-maturation process in which the active site pyruvoyl group is generated from an internal serine residue via an autocatalytic post-translational modification. Two non-identical subunits are generated from the proenzyme in this reaction, and the pyruvate is formed at the N-terminus of the alpha chain, which is derived from the carboxyl end of the proenzyme. The post-translation cleavage follows an unusual pathway, termed non-hydrolytic serinolysis, in which the side chain hydroxyl group of the serine supplies its oxygen atom to form the C-terminus of the beta chain, while the remainder of the serine residue undergoes an oxidative deamination to produce ammonia and the pyruvoyl prosthetic group on the alpha chain.

It localises to the cell membrane. It carries out the reaction a 1,2-diacyl-sn-glycero-3-phospho-L-serine + H(+) = a 1,2-diacyl-sn-glycero-3-phosphoethanolamine + CO2. The protein operates within phospholipid metabolism; phosphatidylethanolamine biosynthesis; phosphatidylethanolamine from CDP-diacylglycerol: step 2/2. Its function is as follows. Catalyzes the formation of phosphatidylethanolamine (PtdEtn) from phosphatidylserine (PtdSer). The chain is Phosphatidylserine decarboxylase proenzyme from Burkholderia cenocepacia (strain HI2424).